Here is a 348-residue protein sequence, read N- to C-terminus: Rhodopsin (348 aa).

The residue at position 1 (Met1) is an N-acetylmethionine. The Extracellular portion of the chain corresponds to 1–36 (MNGTEGPNFYVPFSNITGVVRSPFEQPQYYLAEPWQ). 2 N-linked (GlcNAc...) asparagine glycosylation sites follow: Asn2 and Asn15. A helical membrane pass occupies residues 37–61 (FSMLAAYMFLLIVLGFPINFLTLYV). The Cytoplasmic portion of the chain corresponds to 62-73 (TVQHKKLRTPLN). Residues 74–96 (YILLNLAVADLFMVFGGFTTTLY) traverse the membrane as a helical segment. Residues 97–110 (TSLHGYFVFGPTGC) lie on the Extracellular side of the membrane. Cys110 and Cys187 are joined by a disulfide. The helical transmembrane segment at 111–133 (NLEGFFATLGGEIGLWSLVVLAI) threads the bilayer. Residues 134-136 (ERY) carry the 'Ionic lock' involved in activated form stabilization motif. Residues 134–152 (ERYVVVCKPMSNFRFGENH) lie on the Cytoplasmic side of the membrane. The chain crosses the membrane as a helical span at residues 153–173 (AIMGVAFTWVMALACAAPPLV). Residues 174 to 202 (GWSRYIPEGMQCSCGIDYYTLKPEVNNES) lie on the Extracellular side of the membrane. Residue Glu201 coordinates Zn(2+). Residues 203-224 (FVIYMFVVHFTIPMIVIFFCYG) form a helical membrane-spanning segment. The Cytoplasmic portion of the chain corresponds to 225-252 (QLVFTVKEAAAQQQESATTQKAEKEVTR). Residues 253-274 (MVIIMVIFFLICWLPYASVAMY) form a helical membrane-spanning segment. Residues 275-286 (IFTHQGSNFGPI) are Extracellular-facing. Gln279 serves as a coordination point for Zn(2+). Residues 287–308 (FMTLPAFFAKTASIYNPIIYIM) traverse the membrane as a helical segment. Position 296 is an N6-(retinylidene)lysine (Lys296). At 309 to 348 (MNKQFRNCMLTSLCCGKNPLGDDEASATASKTETSQVAPA) the chain is on the cytoplasmic side. Residues Cys322 and Cys323 are each lipidated (S-palmitoyl cysteine). Residues 330–348 (DDEASATASKTETSQVAPA) form an interaction with SAG region. Ser334 carries the post-translational modification Phosphoserine. A Phosphothreonine modification is found at Thr336. Phosphoserine is present on Ser338. 2 positions are modified to phosphothreonine: Thr340 and Thr342. A Phosphoserine modification is found at Ser343.

It belongs to the G-protein coupled receptor 1 family. Opsin subfamily. As to quaternary structure, homodimer. May form a complex composed of RHO, GRK1 and RCVRN in a Ca(2+)-dependent manner; RCVRN prevents the interaction between GRK1 and RHO. Interacts with GRK1. Interacts (phosphorylated form) with SAG. Interacts with GNAT1. Interacts with GNAT3. SAG and G-proteins compete for a common binding site. Interacts with PRCD; the interaction promotes PRCD stability. Forms a complex with ASAP1 and ARF4. Forms a complex with ASAP1, RAB11A, Rabin8/RAB3IP, ARF4 and RAB11FIP3; the complex regulates Golgi-to-cilia rhodopsin/RHO transport in photoreceptors. Phosphorylated on some or all of the serine and threonine residues present in the C-terminal region. Post-translationally, contains one covalently linked retinal chromophore. Upon light absorption, the covalently bound 11-cis-retinal is converted to all-trans-retinal. After hydrolysis of the Schiff base and release of the covalently bound all-trans-retinal, active rhodopsin is regenerated by binding of a fresh molecule of 11-cis-retinal.

It is found in the membrane. The protein resides in the cell projection. Its subcellular location is the cilium. The protein localises to the photoreceptor outer segment. Photoreceptor required for image-forming vision at low light intensity. Required for photoreceptor cell viability after birth. Light-induced isomerization of 11-cis to all-trans retinal triggers a conformational change that activates signaling via G-proteins. Subsequent receptor phosphorylation mediates displacement of the bound G-protein alpha subunit by the arrestin SAG and terminates signaling. The polypeptide is Rhodopsin (Rho) (Rattus norvegicus (Rat)).